The following is a 143-amino-acid chain: Anti-sigma F factor (143 aa).

Belongs to the anti-sigma-factor family.

The catalysed reaction is L-seryl-[protein] + ATP = O-phospho-L-seryl-[protein] + ADP + H(+). It carries out the reaction L-threonyl-[protein] + ATP = O-phospho-L-threonyl-[protein] + ADP + H(+). Functionally, binds to sigma F and blocks its ability to form an RNA polymerase holoenzyme (E-sigma F). Phosphorylates SpoIIAA on a serine residue. This phosphorylation may enable SpoIIAA to act as an anti-anti-sigma factor that counteracts SpoIIAB and thus releases sigma F from inhibition. This Clostridium beijerinckii (strain ATCC 51743 / NCIMB 8052) (Clostridium acetobutylicum) protein is Anti-sigma F factor.